The following is a 906-amino-acid chain: NACHT, LRR and PYD domains-containing protein 1b allele 4 (906 aa).

The segment at 1 to 22 (MEESPPKQKSNTKVAQHEGQQD) is disordered. The 310-residue stretch at 126-435 (QLVIIEGAAG…EFFAAISCIL (310 aa)) folds into the NACHT domain. 132-139 (GAAGIGKS) provides a ligand contact to ATP. LRR repeat units follow at residues 627 to 647 (NLEG…QSLC) and 684 to 704 (SLTE…RMLC). Positions 789–906 (FWGPTGPVAT…FQEHGSRNAR (118 aa)) constitute an FIIND (incomplete) domain.

Belongs to the NLRP family. Expressed in macrophages.

The protein resides in the cytoplasm. Its subcellular location is the cytosol. Its function is as follows. Probable inactive allele of Nlrp1b, which lacks a CARD domain, suggesting that it is not able to form an inflammasome. Contrary to Nlrp1b allele 1, allele 4 is not activated by B.anthracis lethal toxin and no other activation signal is reported. The sequence is that of NACHT, LRR and PYD domains-containing protein 1b allele 4 from Mus musculus (Mouse).